The primary structure comprises 245 residues: Probable phosphatase Spro_1934 (245 aa).

Zn(2+) is bound by residues histidine 7, histidine 9, histidine 15, histidine 40, glutamate 73, histidine 101, histidine 131, aspartate 192, and histidine 194.

Belongs to the PHP family. As to quaternary structure, homotrimer. It depends on Zn(2+) as a cofactor.

The protein is Probable phosphatase Spro_1934 of Serratia proteamaculans (strain 568).